The primary structure comprises 630 residues: tRNA uridine 5-carboxymethylaminomethyl modification enzyme MnmG (630 aa).

14–19 (GGGHAG) lines the FAD pocket. 282–296 (GTRYCPSIEDKVRKF) lines the NAD(+) pocket.

It belongs to the MnmG family. As to quaternary structure, homodimer. Heterotetramer of two MnmE and two MnmG subunits. FAD serves as cofactor.

It localises to the cytoplasm. Functionally, NAD-binding protein involved in the addition of a carboxymethylaminomethyl (cmnm) group at the wobble position (U34) of certain tRNAs, forming tRNA-cmnm(5)s(2)U34. This chain is tRNA uridine 5-carboxymethylaminomethyl modification enzyme MnmG, found in Treponema pallidum (strain Nichols).